Reading from the N-terminus, the 41-residue chain is LLMPVKPNDDRVIGCWCISRGYLCGCMPCKLNDDSLCGRKG.

3 cysteine pairs are disulfide-bonded: Cys-15–Cys-26, Cys-17–Cys-24, and Cys-29–Cys-37.

In terms of biological role, has two active sites that simultaneously bind and inhibit trypsin. This Trichosanthes kirilowii (Chinese snake gourd) protein is Trypsin inhibitor.